The chain runs to 652 residues: ATP-dependent zinc metalloprotease FtsH (652 aa).

Residues 1-11 are Cytoplasmic-facing; sequence MKKQNNGLIKN. A helical transmembrane segment spans residues 12–32; sequence PFLWLLFIFFLVTGFQYFYSG. The Extracellular portion of the chain corresponds to 33-131; sequence NNSGGSQQIN…EVTVKHESSS (99 aa). The chain crosses the membrane as a helical span at residues 132 to 152; it reads GIWINLLVSIVPFGILFFFLF. Residues 153-652 are Cytoplasmic-facing; sequence SMMGNMGGGN…EVKSKMNDEK (500 aa). Residue 227-234 coordinates ATP; that stretch reads GPPGTGKT. His449 is a Zn(2+) binding site. Residue Glu450 is part of the active site. Residues His453 and Asp525 each contribute to the Zn(2+) site. Positions 628 to 652 are disordered; sequence MPEAVEEESHALSYDEVKSKMNDEK. The span at 634-652 shows a compositional bias: basic and acidic residues; it reads EESHALSYDEVKSKMNDEK.

It in the central section; belongs to the AAA ATPase family. This sequence in the C-terminal section; belongs to the peptidase M41 family. In terms of assembly, homohexamer. Requires Zn(2+) as cofactor.

It localises to the cell membrane. Acts as a processive, ATP-dependent zinc metallopeptidase for both cytoplasmic and membrane proteins. Plays a role in the quality control of integral membrane proteins. This Streptococcus pneumoniae (strain ATCC BAA-255 / R6) protein is ATP-dependent zinc metalloprotease FtsH.